A 321-amino-acid chain; its full sequence is Chloroplastic calcium uniporter protein (321 aa).

Residues 1–56 (MSSKKSLVQSLFNISKTYSRISGLTRMRPTKSGGIPPDAGDSGIRRRFLHKRAFFS) constitute a chloroplast transit peptide. A run of 2 helical transmembrane segments spans residues 223-243 (LWAG…LTFW) and 249-269 (VMEP…YAFF). Positions 247–255 (WDVMEPICF) match the Selectivity filter motif. Residue E251 participates in Ca(2+) binding.

This sequence belongs to the MCU (TC 1.A.77) family.

The protein resides in the plastid. The protein localises to the chloroplast membrane. The enzyme catalyses Ca(2+)(in) = Ca(2+)(out). Chloroplastic membrane calcium uniporter that mediates calcium uptake into chloroplast stroma. Constitutes a pore-forming and calcium-conducting subunit. Chloroplastic calcium homeostasis plays key roles in cellular physiology. Promotes calcium uptake into chloroplast stroma in response to osmotic-stress, fine-tuning cytosolic MAPK3/MAPK6 phosphorylation and affecting stomata opening. The protein is Chloroplastic calcium uniporter protein of Arabidopsis thaliana (Mouse-ear cress).